Here is a 492-residue protein sequence, read N- to C-terminus: MEKVDIFKDIAERTGGDIYFGVVGAVRTGKSTFIKKFMELVVIPNIENESDRQRAQDELPQSAAGRTIMTTEPKFVPNQAVSIEVDEGLEVNIRLVDCVGYTVPGAKGYEDENGPRMINTPWYEEPIPFHEAAEIGTRKVIQEHSTIGVVITTDGTIGEIPRRDYIEAEERVVNELKEVGKPFIMIINTVQPYHPDTEQLRQSLSEEYDIPVIAMSVESLRETDVYNVLREALFEFPVLEVNVNLPSWVMVLNEGHWLRQSYQEAVQETVKDIKRLRDVDRVVWQFSQYEFIDRASLAGIDMGQGVAEIDLYAPDELYDQILKEVVGVEIRGKDHLLKLMLDLSHAKIEYDQVADALRMVKQTGYGVAAPALADMSLDEPEIIRHGSRFGVKLKAVAPSIHMIKVDVESTFEPIIGTEKQSEELVRYLMQDFEDDPLSIWNSDIFGRSLSSIVREGIQAKLSLMPENARYKLKETLERIINEGSGGLIAIIL.

The short motif at 24-31 is the Walker A motif; involved in ATP-binding element; that stretch reads GAVRTGKS. 24–31 contributes to the ATP binding site; it reads GAVRTGKS.

It is found in the cytoplasm. The enzyme catalyses ATP + H2O = ADP + phosphate + H(+). ATPase. Has a role at an early stage in the morphogenesis of the spore coat outer layers. Directs the assembly of the coat and exosporium to an area around the forespore. In Bacillus anthracis, this protein is Stage IV sporulation protein A.